Reading from the N-terminus, the 428-residue chain is Gamma-glutamyl phosphate reductase (428 aa).

This sequence belongs to the gamma-glutamyl phosphate reductase family.

It localises to the cytoplasm. The enzyme catalyses L-glutamate 5-semialdehyde + phosphate + NADP(+) = L-glutamyl 5-phosphate + NADPH + H(+). It functions in the pathway amino-acid biosynthesis; L-proline biosynthesis; L-glutamate 5-semialdehyde from L-glutamate: step 2/2. Its function is as follows. Catalyzes the NADPH-dependent reduction of L-glutamate 5-phosphate into L-glutamate 5-semialdehyde and phosphate. The product spontaneously undergoes cyclization to form 1-pyrroline-5-carboxylate. In Chelativorans sp. (strain BNC1), this protein is Gamma-glutamyl phosphate reductase.